A 117-amino-acid polypeptide reads, in one-letter code: Large ribosomal subunit protein uL24 (117 aa).

This sequence belongs to the universal ribosomal protein uL24 family. Part of the 50S ribosomal subunit.

In terms of biological role, one of two assembly initiator proteins, it binds directly to the 5'-end of the 23S rRNA, where it nucleates assembly of the 50S subunit. Its function is as follows. One of the proteins that surrounds the polypeptide exit tunnel on the outside of the subunit. The protein is Large ribosomal subunit protein uL24 of Nostoc punctiforme (strain ATCC 29133 / PCC 73102).